A 449-amino-acid polypeptide reads, in one-letter code: Adenylyltransferase and sulfurtransferase MOCS3 (449 aa).

Residues Gly96, Asp117, 124–128, Lys141, and 185–186 each bind ATP; these read SNLHR and DN. Zn(2+) contacts are provided by Cys227 and Cys230. The active-site Glycyl thioester intermediate; for adenylyltransferase activity is Cys244. Zn(2+) contacts are provided by Cys302 and Cys305. A Rhodanese domain is found at 351–447; it reads QDKPHLLLDV…WTNQIDENFP (97 aa). The active-site Cysteine persulfide intermediate; for sulfurtransferase activity is the Cys406.

This sequence in the N-terminal section; belongs to the HesA/MoeB/ThiF family. UBA4 subfamily. Zn(2+) serves as cofactor.

It localises to the cytoplasm. Its subcellular location is the cytosol. The catalysed reaction is [molybdopterin-synthase sulfur-carrier protein]-C-terminal Gly-Gly + ATP + H(+) = [molybdopterin-synthase sulfur-carrier protein]-C-terminal Gly-Gly-AMP + diphosphate. The enzyme catalyses [molybdopterin-synthase sulfur-carrier protein]-C-terminal Gly-Gly-AMP + S-sulfanyl-L-cysteinyl-[cysteine desulfurase] + AH2 = [molybdopterin-synthase sulfur-carrier protein]-C-terminal-Gly-aminoethanethioate + L-cysteinyl-[cysteine desulfurase] + A + AMP + 2 H(+). The protein operates within tRNA modification; 5-methoxycarbonylmethyl-2-thiouridine-tRNA biosynthesis. It functions in the pathway cofactor biosynthesis; molybdopterin biosynthesis. Its function is as follows. Plays a central role in 2-thiolation of mcm(5)S(2)U at tRNA wobble positions of cytosolic tRNA(Lys), tRNA(Glu) and tRNA(Gln). Also essential during biosynthesis of the molybdenum cofactor. Acts by mediating the C-terminal thiocarboxylation of sulfur carriers URM1 and MOCS2A. Its N-terminus first activates URM1 and MOCS2A as acyl-adenylates (-COAMP), then the persulfide sulfur on the catalytic cysteine is transferred to URM1 and MOCS2A to form thiocarboxylation (-COSH) of their C-terminus. The reaction probably involves hydrogen sulfide that is generated from the persulfide intermediate and that acts as a nucleophile towards URM1 and MOCS2A. Subsequently, a transient disulfide bond is formed. Does not use thiosulfate as sulfur donor; NFS1 probably acting as a sulfur donor for thiocarboxylation reactions. The chain is Adenylyltransferase and sulfurtransferase MOCS3 from Drosophila grimshawi (Hawaiian fruit fly).